Consider the following 202-residue polypeptide: CASP-like protein 2U7 (202 aa).

At 1 to 10 (MLELYEKRRA) the chain is on the cytoplasmic side. Residues 11 to 31 (LLLLRLAAMFLSLAALLITVL) form a helical membrane-spanning segment. Residues 32 to 64 (NREDGFFSINVFGSPQPILTKATADFTLVKGLK) are Extracellular-facing. A helical transmembrane segment spans residues 65-85 (FFAGAMGIVAGYSFLQLAIAM). At 86–101 (ASMFSGAPSILGGKRM) the chain is on the cytoplasmic side. The helical transmembrane segment at 102–122 (AWLCFVGDMTASHLCAAAAAV) threads the bilayer. Over 123 to 148 (SAQLAYLGKRGAPMWSAVCTYFSHYC) the chain is Extracellular. A helical transmembrane segment spans residues 149–169 (LVFGLAVIFAFLATLAALLVA). Topologically, residues 170-202 (SISSYHLFRLHGILQQQQQQRRQLQQEHVQDKP) are cytoplasmic.

It belongs to the Casparian strip membrane proteins (CASP) family. In terms of assembly, homodimer and heterodimers.

Its subcellular location is the cell membrane. This is CASP-like protein 2U7 from Selaginella moellendorffii (Spikemoss).